Reading from the N-terminus, the 201-residue chain is Small ribosomal subunit protein uS10m (201 aa).

The protein belongs to the universal ribosomal protein uS10 family. In terms of assembly, component of the mitochondrial ribosome small subunit (28S) which comprises a 12S rRNA and about 30 distinct proteins.

The protein resides in the mitochondrion. The protein is Small ribosomal subunit protein uS10m (MRPS10) of Pongo abelii (Sumatran orangutan).